The primary structure comprises 101 residues: Small ribosomal subunit protein bS18c (101 aa).

Residues methionine 1–leucine 19 show a composition bias toward basic residues. A disordered region spans residues methionine 1–glutamine 23.

This sequence belongs to the bacterial ribosomal protein bS18 family. As to quaternary structure, part of the 30S ribosomal subunit.

The protein localises to the plastid. The protein resides in the chloroplast. This Draba nemorosa (Woodland whitlowgrass) protein is Small ribosomal subunit protein bS18c.